The chain runs to 433 residues: Enolase (433 aa).

Residue Gln167 participates in (2R)-2-phosphoglycerate binding. Glu209 (proton donor) is an active-site residue. Mg(2+)-binding residues include Asp246, Glu291, and Asp318. Positions 343, 372, 373, and 394 each coordinate (2R)-2-phosphoglycerate. Lys343 functions as the Proton acceptor in the catalytic mechanism.

This sequence belongs to the enolase family. As to quaternary structure, component of the RNA degradosome, a multiprotein complex involved in RNA processing and mRNA degradation. Mg(2+) serves as cofactor.

The protein resides in the cytoplasm. It localises to the secreted. It is found in the cell surface. The catalysed reaction is (2R)-2-phosphoglycerate = phosphoenolpyruvate + H2O. Its pathway is carbohydrate degradation; glycolysis; pyruvate from D-glyceraldehyde 3-phosphate: step 4/5. Catalyzes the reversible conversion of 2-phosphoglycerate (2-PG) into phosphoenolpyruvate (PEP). It is essential for the degradation of carbohydrates via glycolysis. The sequence is that of Enolase from Aeromonas hydrophila subsp. hydrophila (strain ATCC 7966 / DSM 30187 / BCRC 13018 / CCUG 14551 / JCM 1027 / KCTC 2358 / NCIMB 9240 / NCTC 8049).